Reading from the N-terminus, the 243-residue chain is Terpene cyclase dpmaB (243 aa).

Transmembrane regions (helical) follow at residues 11 to 31 (PGYLEVAWIADTCKLLMGLGW), 51 to 71 (ALMPLCCNFAWELTYAVIYPF), 112 to 132 (LPFIFIICIAAWTTAHLALAL), 141 to 161 (AFSAYGCQLLLSVGALCQLLS), 169 to 189 (SYFLWFCRFFGSLVLIPQDVL), and 207 to 227 (IWFVSIFLLLDGSYALCLWYV).

Belongs to the paxB family.

Its subcellular location is the membrane. It functions in the pathway secondary metabolite biosynthesis; terpenoid biosynthesis. Terpene cyclase; part of the gene cluster that mediates the biosynthesis of the diterpenoid pyrones subglutinols A and B. The first step of the pathway is the synthesis of the alpha-pyrone moiety by the polyketide synthase dpmaA via condensation of one acetyl-CoA starter unit with 3 malonyl-CoA units and 2 methylations. The alpha-pyrone is then combined with geranylgeranyl pyrophosphate (GGPP) formed by the GGPP synthase dpmaD through the action of the prenyltransferase dpmaC to yield a linear alpha-pyrone diterpenoid. Subsequent steps in the diterpenoid pyrone biosynthetic pathway involve the decalin core formation, which is initiated by the epoxidation of the C10-C11 olefin by the FAD-dependent oxidoreductase dpmaE, and is followed by a cyclization cascade catalyzed by the terpene cyclase dpmaB. The dehydrogenase dpmaF is then involved in tetrahydrofuran (THF) ring formation at the C5 unit to complete the formation of subglutinols A and B. The chain is Terpene cyclase dpmaB from Metarhizium anisopliae (Entomophthora anisopliae).